A 504-amino-acid polypeptide reads, in one-letter code: Arabinose import ATP-binding protein AraG (504 aa).

ABC transporter domains lie at 8-243 and 256-499; these read LSFR…MVGR and YGEE…MPKV. ATP is bound at residue 40-47; sequence GENGAGKS.

This sequence belongs to the ABC transporter superfamily. Arabinose importer (TC 3.A.1.2.2) family. In terms of assembly, the complex is composed of two ATP-binding proteins (AraG), two transmembrane proteins (AraH) and a solute-binding protein (AraF).

Its subcellular location is the cell inner membrane. It carries out the reaction L-arabinose(out) + ATP + H2O = L-arabinose(in) + ADP + phosphate + H(+). Functionally, part of the ABC transporter complex AraFGH involved in arabinose import. Responsible for energy coupling to the transport system. In Shigella sonnei (strain Ss046), this protein is Arabinose import ATP-binding protein AraG.